A 520-amino-acid polypeptide reads, in one-letter code: Protein OS-9 homolog (520 aa).

The first 23 residues, 1–23, serve as a signal peptide directing secretion; that stretch reads MIRRIRTLTPLLVLACAGSGAWA. Over residues 121-135 the composition is skewed to polar residues; that stretch reads QVDNGNRDQTNGAES. The tract at residues 121 to 144 is disordered; it reads QVDNGNRDQTNGAESTSKEDEQRE. The MRH domain occupies 161 to 302; it reads GKCMYYISGW…VIYTPRLCND (142 aa). A disulfide bridge connects residues C163 and C176. Residues W170, W171, Q183, D257, R263, E284, and Y290 each coordinate a mannooligosaccharide derivative. Disulfide bonds link C256–C288 and C271–C300. The segment at 442–520 is disordered; sequence GLVGTVDSND…SEEIFFKDEL (79 aa). A compositionally biased stretch (polar residues) spans 461 to 471; it reads GSISQPAQGTT. Basic and acidic residues predominate over residues 473 to 499; that stretch reads DKGESNAETGEEKKKADEKIDHYEPEK. The Prevents secretion from ER signature appears at 517–520; sequence KDEL.

The protein belongs to the OS-9 family. Interacts with missfolded ER lumenal proteins.

The protein resides in the endoplasmic reticulum membrane. Lectin involved in the quality control of the secretory pathway. As a member of the endoplasmic reticulum-associated degradation lumenal (ERAD-L) surveillance system, targets misfolded endoplasmic reticulum lumenal glycoproteins for degradation. In Aspergillus fumigatus (strain ATCC MYA-4609 / CBS 101355 / FGSC A1100 / Af293) (Neosartorya fumigata), this protein is Protein OS-9 homolog (yos9).